Here is a 604-residue protein sequence, read N- to C-terminus: Aspartate--tRNA(Asp/Asn) ligase (604 aa).

Glutamate 175 contributes to the L-aspartate binding site. Residues 199-202 form an aspartate region; the sequence is QQFK. The L-aspartate site is built by arginine 221 and histidine 456. 221 to 223 lines the ATP pocket; sequence RDE. Glutamate 496 is an ATP binding site. Position 503 (arginine 503) interacts with L-aspartate. 548 to 551 contacts ATP; it reads GVDR.

It belongs to the class-II aminoacyl-tRNA synthetase family. Type 1 subfamily. As to quaternary structure, homodimer.

Its subcellular location is the cytoplasm. The enzyme catalyses tRNA(Asx) + L-aspartate + ATP = L-aspartyl-tRNA(Asx) + AMP + diphosphate. Its function is as follows. Aspartyl-tRNA synthetase with relaxed tRNA specificity since it is able to aspartylate not only its cognate tRNA(Asp) but also tRNA(Asn). Reaction proceeds in two steps: L-aspartate is first activated by ATP to form Asp-AMP and then transferred to the acceptor end of tRNA(Asp/Asn). This Methylobacterium sp. (strain 4-46) protein is Aspartate--tRNA(Asp/Asn) ligase.